The primary structure comprises 476 residues: UDP-N-acetylmuramate--L-alanine ligase (476 aa).

Position 112–118 (112–118 (GTHGKTT)) interacts with ATP.

The protein belongs to the MurCDEF family.

The protein localises to the cytoplasm. The catalysed reaction is UDP-N-acetyl-alpha-D-muramate + L-alanine + ATP = UDP-N-acetyl-alpha-D-muramoyl-L-alanine + ADP + phosphate + H(+). Its pathway is cell wall biogenesis; peptidoglycan biosynthesis. Cell wall formation. This Magnetococcus marinus (strain ATCC BAA-1437 / JCM 17883 / MC-1) protein is UDP-N-acetylmuramate--L-alanine ligase.